The primary structure comprises 206 residues: Oligoribonuclease (206 aa).

Residues 20-183 (LVWLDMEMTG…ADIHESIDEL (164 aa)) form the Exonuclease domain. Residue Y141 is part of the active site.

It belongs to the oligoribonuclease family.

Its subcellular location is the cytoplasm. Functionally, 3'-to-5' exoribonuclease specific for small oligoribonucleotides. The chain is Oligoribonuclease from Burkholderia ambifaria (strain ATCC BAA-244 / DSM 16087 / CCUG 44356 / LMG 19182 / AMMD) (Burkholderia cepacia (strain AMMD)).